A 63-amino-acid chain; its full sequence is Large ribosomal subunit protein uL29 (63 aa).

This sequence belongs to the universal ribosomal protein uL29 family.

The polypeptide is Large ribosomal subunit protein uL29 (Colwellia psychrerythraea (strain 34H / ATCC BAA-681) (Vibrio psychroerythus)).